Consider the following 35-residue polypeptide: Mu-thomitoxin-Hme1c (35 aa).

3 disulfides stabilise this stretch: C2–C18, C9–C23, and C17–C34.

Belongs to the neurotoxin 07 (Beta/delta-agtx) family. Expressed by the venom gland.

It is found in the secreted. Functionally, gating-modifier toxin that inhibits mammalian and insect voltage-gated sodium channels. It shifts the voltage dependence of channel activation to more positive voltages. It shows potent activity on Nav1.4/SCN4A (IC(50)=103 nM), Nav1.5/SCN5A (IC(50)=268 nM) and Para/DmNav1 (IC(50)=555 nM) and lower activities on Nav1.2/SCN2A (IC(50)=1447 nM) and Nav1.6/SCN8A (IC(50)=3504 nM). In addition, at a concentration of 1 uM, the toxin inhibits 90-100% of sodium current through Nav1.2/SCN2A, Nav1.4/SCN4A, Nav1.5/SCN5A, Nav1.6/SCN8A and Para/DmNav1 channels, when the voltage of maximal activation of the channel in control conditions is applied. It binds to the S3-S4 helix-loop-helix motif in the voltage-sensing domain of repeat 1 (shown on hNav1.4/SCN4A). The toxin is amphiphilic and binds to both neutral and negatively charged lipid vesicles with high affinity. The hydrophobic face lies on the opposite side to the hydrophobic faces of classical gating modifiers. This chain is Mu-thomitoxin-Hme1c, found in Heriaeus mellotteei (Crab spider).